An 820-amino-acid chain; its full sequence is MRYDPSLIEKKWQQFWKEHKSFKADETADKPKYYVLDMFPYPSGAGLHVGHLIGYTATDIVARYKRAKGFSVLHPMGWDSFGLPAEQYAVRTGTHPRETTKKNIENFRKQLSAMGFSYDEAREFATSDPEYYRWTQKLFLFLYEKGLAYMADMAVNYCEELGTVLANEEVENGLSIEGGYPVERRMLRQWILRITAYADQLLQGLEDLDWPENVKQLQRNWIGKSEGALLRFVVDKDKCLEVFTTRPDTLCGVSFLVMAPEHPEIQQLVSEEQRSAVESYIRCAQSKSERERISETKVKSGVFTGAYAKHAITGAALPIWVSDYVIMGYGSGVVMGVPAHDERDREFANAFALPIDEVLDENEHCINSNHGDFLLNGLQGKEASDYVIAYLQKRNLGEAKVMYKLHDWLFSRQRYWGEPIPIIHFEDGTCRPLEDDELPLLPPEIQDYRPKGFGQGPLAKVKEWVDIHDVKTQRPGRRETHTMPQWAGSCWYYLRFCDAHNSQAPWSHENERYWMPVDLYIGGAEHAVLHLLYSRFWHRVFYEAGLVSTPEPFKKLINQGLVLATSYRIPGKGYVHPEDAREDNGKWTTASGEELEVRQEKMSKSKLNGVDPQILIDEFGADALRMYAMFSGPLDKNKLWCNQGVSGCRRFLNRFYELATSSAVQDIDDPKGMALAHRLVHKVGEDIEKMSLNTIPSSFMEFINEFAKLDTYSKSALSMVVRALAPIAPHISEELWTVLGYAPGIDNAGWPEVDPKYLEDTSVTFVIQVNGKLRARLDMDKNTSQEDILSAARESVAKYLEDKEIKKEVFVPNRLVNFVL.

A 'HIGH' region motif is present at residues 40-51 (PYPSGAGLHVGH). The 'KMSKS' region motif lies at 601–605 (KMSKS). Lys604 provides a ligand contact to ATP.

It belongs to the class-I aminoacyl-tRNA synthetase family.

Its subcellular location is the cytoplasm. It carries out the reaction tRNA(Leu) + L-leucine + ATP = L-leucyl-tRNA(Leu) + AMP + diphosphate. This chain is Leucine--tRNA ligase, found in Chlamydia abortus (strain DSM 27085 / S26/3) (Chlamydophila abortus).